Reading from the N-terminus, the 67-residue chain is Kappa-conotoxin-like 2 (67 aa).

A signal peptide spans 1-26 (MMFRLTSVSCFLLVIACLNLFQVVLT). Disulfide bonds link C29–C43, C36–C48, C42–C51, and C47–C55. F59 bears the Phenylalanine amide mark. Residues 63–67 (ATFQE) constitute a propeptide that is removed on maturation.

Belongs to the conotoxin I2 superfamily. As to expression, expressed by the venom duct.

The protein localises to the secreted. Inhibits the vertebrate voltage-gated potassium channels Kv1.1/KCNA1 and Kv1.3/KCNA3. This chain is Kappa-conotoxin-like 2, found in Conus vexillum (Flag cone).